The sequence spans 203 residues: Recombination protein RecR (203 aa).

A C4-type zinc finger spans residues 57 to 73; that stretch reads CQSCGTLKSNSLGCNNC. The region spanning 81 to 175 is the Toprim domain; that stretch reads NKICVVEDIA…KVTKLAQGLP (95 aa).

This sequence belongs to the RecR family.

Functionally, may play a role in DNA repair. It seems to be involved in an RecBC-independent recombinational process of DNA repair. It may act with RecF and RecO. The chain is Recombination protein RecR from Pelagibacter ubique (strain HTCC1062).